Reading from the N-terminus, the 474-residue chain is Melanopsin (474 aa).

Over 1–72 (MNSPSESRVP…VDVPDHAHYT (72 aa)) the chain is Extracellular. Asn-31 and Asn-35 each carry an N-linked (GlcNAc...) asparagine glycan. A helical membrane pass occupies residues 73 to 93 (LGTVILLVGLTGMLGNLTVIY). At 94 to 107 (TFCRNRGLRTPANM) the chain is on the cytoplasmic side. The chain crosses the membrane as a helical span at residues 108-128 (LIINLAVSDFLMSFTQAPVFF). Residues 129–144 (ASSLYKKWLFGETGCK) lie on the Extracellular side of the membrane. A disulfide bridge connects residues Cys-143 and Cys-221. A helical membrane pass occupies residues 145 to 165 (FYAFCGAVFGIVSMITLTAIA). Residues 166–188 (MDRYLVITRPLATIGMRSKRRTA) lie on the Cytoplasmic side of the membrane. A helical transmembrane segment spans residues 189–209 (LVLLGVWLYALAWSLPPFFGW). Over 210–238 (SAYVPEGLLTSCSWDYVTFTPLVRAYTML) the chain is Extracellular. A helical transmembrane segment spans residues 239–259 (LFCFVFFLPLLIIIFCYIFIF). The Cytoplasmic segment spans residues 260–293 (RAIRETGRACEGCGESPLRRRQWQRLQSEWKMAK). Residues 294–314 (VALIVILLFVLSWAPYSTVAL) traverse the membrane as a helical segment. The Extracellular segment spans residues 315 to 355 (VGFAGYSHILTPYMSSVPAVIAKASAIHNPIIYAITHPKYR). Lys-337 carries the N6-(retinylidene)lysine modification. A helical transmembrane segment spans residues 356–372 (AAIAQHLPCLGVLLGVS). The Cytoplasmic segment spans residues 373 to 474 (GQRSHPSLSY…RHLPSLDRRM (102 aa)). Positions 428-474 (AAQQASGQSFCSHDLEDGEVKAPSSPQEQKSKTPKTKRHLPSLDRRM) are disordered.

Belongs to the G-protein coupled receptor 1 family. Opsin subfamily. Eye; expressed in a photosensitive subset of retinal ganglion cells (at protein level).

The protein resides in the cell membrane. The protein localises to the cell projection. Its subcellular location is the axon. It localises to the dendrite. It is found in the perikaryon. Functionally, photoreceptor that binds cis-retinaldehydes. Contributes to pupillar reflex, photoentrainment and other non-image forming responses to light. May be involved in the optokinetic visual tracking response. May be involved in the regulation of retinal hyaloid vessel growth and regression. In Rattus norvegicus (Rat), this protein is Melanopsin.